We begin with the raw amino-acid sequence, 296 residues long: Deleted in azoospermia-like (296 aa).

Residues Met-1–Asn-18 show a composition bias toward polar residues. The segment at Met-1–Ala-25 is disordered. Positions Asn-40–Arg-115 constitute an RRM domain. A homodimerization region spans residues Lys-80–Asn-132. Residues Ala-167–Gln-190 enclose the DAZ domain. At Tyr-277 the chain carries Phosphotyrosine.

It belongs to the RRM DAZ family. Homodimer and heterodimer. Forms a heterodimer with DAZ. Interacts with BOLL, DAZAP1 and DAZAP2. Interacts with PUM2 Multiple DAZL RRMs can bind to a single RNA containing multiple GUU triplets. Testis specific.

The protein localises to the cytoplasm. Its subcellular location is the nucleus. Functionally, RNA-binding protein, which is essential for gametogenesis in both males and females. Plays a central role during spermatogenesis. Acts by binding to the 3'-UTR of mRNA, specifically recognizing GUU triplets, and thereby regulating the translation of key transcripts. The chain is Deleted in azoospermia-like (DAZL) from Callithrix jacchus (White-tufted-ear marmoset).